Reading from the N-terminus, the 305-residue chain is tRNA-cytidine(32) 2-sulfurtransferase (305 aa).

A disordered region spans residues 1–20 (MTAVLPLPQPLADPAPRDPR). The short motif at 59–64 (SGGKDS) is the PP-loop motif element. 3 residues coordinate [4Fe-4S] cluster: Cys134, Cys137, and Cys225. Positions 282-293 (DAPSDVDPDPSA) are enriched in low complexity. A disordered region spans residues 282–305 (DAPSDVDPDPSAWLSASHAPHDSD).

The protein belongs to the TtcA family. As to quaternary structure, homodimer. It depends on Mg(2+) as a cofactor. The cofactor is [4Fe-4S] cluster.

It is found in the cytoplasm. It carries out the reaction cytidine(32) in tRNA + S-sulfanyl-L-cysteinyl-[cysteine desulfurase] + AH2 + ATP = 2-thiocytidine(32) in tRNA + L-cysteinyl-[cysteine desulfurase] + A + AMP + diphosphate + H(+). It functions in the pathway tRNA modification. Its function is as follows. Catalyzes the ATP-dependent 2-thiolation of cytidine in position 32 of tRNA, to form 2-thiocytidine (s(2)C32). The sulfur atoms are provided by the cysteine/cysteine desulfurase (IscS) system. In Xanthomonas euvesicatoria pv. vesicatoria (strain 85-10) (Xanthomonas campestris pv. vesicatoria), this protein is tRNA-cytidine(32) 2-sulfurtransferase.